The sequence spans 264 residues: 3-deoxy-manno-octulosonate cytidylyltransferase (264 aa).

It belongs to the KdsB family.

It localises to the cytoplasm. The enzyme catalyses 3-deoxy-alpha-D-manno-oct-2-ulosonate + CTP = CMP-3-deoxy-beta-D-manno-octulosonate + diphosphate. It functions in the pathway nucleotide-sugar biosynthesis; CMP-3-deoxy-D-manno-octulosonate biosynthesis; CMP-3-deoxy-D-manno-octulosonate from 3-deoxy-D-manno-octulosonate and CTP: step 1/1. The protein operates within bacterial outer membrane biogenesis; lipopolysaccharide biosynthesis. Activates KDO (a required 8-carbon sugar) for incorporation into bacterial lipopolysaccharide in Gram-negative bacteria. The sequence is that of 3-deoxy-manno-octulosonate cytidylyltransferase from Methylibium petroleiphilum (strain ATCC BAA-1232 / LMG 22953 / PM1).